Reading from the N-terminus, the 900-residue chain is MTEESEETVLYIEHRYVCSECNQLYGSLEEVLVHQNSHVPQQHFELVGVADPGVTVATEAASGTGLYQTLIQESQYQCLECGQLLLSPSQLLEHQELHLKMMAPQEAVPAKPPPKVPPLGSSAIHYECVDCKALFASQEMWLSHRQTHLRATPNKAPAPVVLGSPVVLGPPVGQARVAVEHSYRKAEEGGEGAAVPSVAATTEMVTEVELLLYKCSECSQLFQMPADFLEHQATHFPAPVPEAAEPATQQETQVPSPTEAAVSQPEPLPASDHSYELRNELRNGEAIGRDRRGRKPRRNNSGESGGAATQELFCSACDQLFLSPHQLQQHLRSHREGVFKCPLCSRVFPSPSSLDQHLGDHSSESHFLCVDCGLAFGTEALLLAHRRAHTPNPLHSCPCGKTFVNLTKFLYHRRTHGAGGVPLPTTPVPPEEPAISFPEPAPAETGELEAPELPVCEESSAEPAAPGSYRCLLCSREFGKALQLTRHQRFVHRLERRHKCSICGKMFKKKSHVRNHLRTHTGERPFPCPDCSKPFNSPANLARHRLTHTGERPYRCGDCGKAFTQSSTLRQHRLVHAQHFPYRCQECGVRFHRPYRLLMHRYHHTGEYPYKCRECPRSFLLRRLLEVHQLVIHAGRQPYRCSSCGAAFPSSLRLREHRCAAAAAQAPRRFECGTCGKKVGSAARLQAHEAAHAAAGPGEVLAKEPPAPRASRATRTPVAPSPTALSGTTSAAPAAPARRRGPECSECKKLFSTETSLQVHRRIHTGERPYPCPDCGKAFRQSTHLKDHRRLHTGERPFACEVCGKAFAISMRLAEHRRIHTGERPYSCPDCGKSYRSFSNLWKHRKTHQQQHQAAVRQQLAEAEAAVGLAVMETAVEALPLVEAIEIYPLAEADGVQISG.

C2H2-type zinc fingers lie at residues 16-38 (YVCS…QNSH), 76-98 (YQCL…QELH), and 126-148 (YECV…RQTH). Residue serine 164 is modified to Phosphoserine. The segment at 213–235 (YKCSECSQLFQMPADFLEHQATH) adopts a C2H2-type 4 zinc-finger fold. The span at 244-254 (AEPATQQETQV) shows a compositional bias: low complexity. The disordered stretch occupies residues 244–306 (AEPATQQETQ…RRNNSGESGG (63 aa)). A compositionally biased stretch (basic and acidic residues) spans 273 to 290 (HSYELRNELRNGEAIGRD). Serine 301 is modified (phosphoserine). 10 consecutive C2H2-type zinc fingers follow at residues 312 to 334 (LFCS…LRSH), 339 to 361 (FKCP…LGDH), 367 to 389 (FLCV…RRAH), 395 to 416 (HSCP…RRTH), 469 to 492 (YRCL…RFVH), 498 to 520 (HKCS…LRTH), 526 to 548 (FPCP…RLTH), 554 to 576 (YRCG…RLVH), 582 to 604 (YRCQ…RYHH), and 610 to 633 (YKCR…LVIH). The C2H2-type 15; degenerate zinc finger occupies 639–662 (YRCSSCGAAFPSSLRLREHRCAAA). Residues 670-692 (FECGTCGKKVGSAARLQAHEAAH) form a C2H2-type 16 zinc finger. Residues 690-741 (AAHAAAGPGEVLAKEPPAPRASRATRTPVAPSPTALSGTTSAAPAAPARRRG) form a disordered region. Position 721 is a phosphoserine (serine 721). Positions 721–736 (SPTALSGTTSAAPAAP) are enriched in low complexity. Threonine 728 bears the Phosphothreonine mark. 4 consecutive C2H2-type zinc fingers follow at residues 742–764 (PECS…RRIH), 770–792 (YPCP…RRLH), 798–820 (FACE…RRIH), and 826–848 (YSCP…RKTH). Arginine 836 carries the asymmetric dimethylarginine modification.

It belongs to the krueppel C2H2-type zinc-finger protein family.

The protein resides in the nucleus. In terms of biological role, may be involved in transcriptional regulation. This Mus musculus (Mouse) protein is Zinc finger protein 574 (Znf574).